We begin with the raw amino-acid sequence, 180 residues long: ATP-dependent protease subunit HslV (180 aa).

T10 is a catalytic residue. The Na(+) site is built by G165, C168, and T171.

This sequence belongs to the peptidase T1B family. HslV subfamily. In terms of assembly, a double ring-shaped homohexamer of HslV is capped on each side by a ring-shaped HslU homohexamer. The assembly of the HslU/HslV complex is dependent on binding of ATP.

The protein localises to the cytoplasm. It carries out the reaction ATP-dependent cleavage of peptide bonds with broad specificity.. Allosterically activated by HslU binding. Functionally, protease subunit of a proteasome-like degradation complex believed to be a general protein degrading machinery. In Koribacter versatilis (strain Ellin345), this protein is ATP-dependent protease subunit HslV.